The sequence spans 457 residues: uncharacterized protein (457 aa).

The region spanning 10–69 (ALLQGQTVTVPITALAAGGDGIARLTDGRVLFVAGAVPGDTVEARLVHLKKDHGFGKILQ) is the TRAM domain. Cys82, Cys88, Cys91, and Cys170 together coordinate [4Fe-4S] cluster. S-adenosyl-L-methionine-binding residues include Gln294, Tyr323, Glu344, and Asp387. The Nucleophile role is filled by Cys414.

This sequence belongs to the class I-like SAM-binding methyltransferase superfamily. RNA M5U methyltransferase family.

This is an uncharacterized protein from Gloeobacter violaceus (strain ATCC 29082 / PCC 7421).